The following is a 236-amino-acid chain: Thiamine-phosphate synthase (236 aa).

Residues 57–61 (QLRDK) and asparagine 89 each bind 4-amino-2-methyl-5-(diphosphooxymethyl)pyrimidine. Mg(2+) is bound by residues aspartate 90 and aspartate 109. Serine 128 lines the 4-amino-2-methyl-5-(diphosphooxymethyl)pyrimidine pocket. 154–156 (TPS) lines the 2-[(2R,5Z)-2-carboxy-4-methylthiazol-5(2H)-ylidene]ethyl phosphate pocket. A 4-amino-2-methyl-5-(diphosphooxymethyl)pyrimidine-binding site is contributed by lysine 157. 2-[(2R,5Z)-2-carboxy-4-methylthiazol-5(2H)-ylidene]ethyl phosphate contacts are provided by residues glycine 185 and 205–206 (IS).

This sequence belongs to the thiamine-phosphate synthase family. The cofactor is Mg(2+).

The catalysed reaction is 2-[(2R,5Z)-2-carboxy-4-methylthiazol-5(2H)-ylidene]ethyl phosphate + 4-amino-2-methyl-5-(diphosphooxymethyl)pyrimidine + 2 H(+) = thiamine phosphate + CO2 + diphosphate. The enzyme catalyses 2-(2-carboxy-4-methylthiazol-5-yl)ethyl phosphate + 4-amino-2-methyl-5-(diphosphooxymethyl)pyrimidine + 2 H(+) = thiamine phosphate + CO2 + diphosphate. It carries out the reaction 4-methyl-5-(2-phosphooxyethyl)-thiazole + 4-amino-2-methyl-5-(diphosphooxymethyl)pyrimidine + H(+) = thiamine phosphate + diphosphate. It participates in cofactor biosynthesis; thiamine diphosphate biosynthesis; thiamine phosphate from 4-amino-2-methyl-5-diphosphomethylpyrimidine and 4-methyl-5-(2-phosphoethyl)-thiazole: step 1/1. Its function is as follows. Condenses 4-methyl-5-(beta-hydroxyethyl)thiazole monophosphate (THZ-P) and 2-methyl-4-amino-5-hydroxymethyl pyrimidine pyrophosphate (HMP-PP) to form thiamine monophosphate (TMP). The chain is Thiamine-phosphate synthase from Roseiflexus sp. (strain RS-1).